The following is a 605-amino-acid chain: Pescadillo homolog (605 aa).

The tract at residues 51–484 (KANKGSTAPT…GEEEESESES (434 aa)) is sufficient for interaction with ERB1. A Phosphoserine modification is found at Ser-288. A coiled-coil region spans residues 294–342 (LKSALNADEANTDETEKEEEQEKKQEKEQEKEQNEETELDTFEDNNKNK). A disordered region spans residues 297–342 (ALNADEANTDETEKEEEQEKKQEKEQEKEQNEETELDTFEDNNKNK). Positions 303 to 312 (ANTDETEKEE) are enriched in acidic residues. Thr-308 is modified (phosphothreonine). A compositionally biased stretch (basic and acidic residues) spans 313–327 (EQEKKQEKEQEKEQN). Residues 355 to 449 (PVASLFSAFV…ELVPANKYLP (95 aa)) enclose the BRCT domain. The segment at 459 to 605 (PWGDAIGYDP…AKLNKLDSKK (147 aa)) is disordered. Over residues 473–510 (EEGEEEESESESESEDQVEEEDQEVVAGEEDDDDDEEL) the composition is skewed to acidic residues. The stretch at 530-605 (EADKDVNKSK…AKLNKLDSKK (76 aa)) forms a coiled coil. The segment covering 562–571 (KQKKLYKKMK) has biased composition (basic residues). Residues 575 to 584 (AKKEEQAENL) show a composition bias toward basic and acidic residues. Residues 585–598 (KKKKKQIAKQKAKL) are compositionally biased toward basic residues.

Belongs to the pescadillo family. Component of the NOP7 complex, composed of ERB1, NOP7 and YTM1. The complex is held together by ERB1, which interacts with NOP7 via its N-terminal domain and with YTM1 via a high-affinity interaction between the seven-bladed beta-propeller domains of the 2 proteins. The NOP7 complex associates with the 66S pre-ribosome.

The protein localises to the nucleus. It is found in the nucleolus. The protein resides in the nucleoplasm. In terms of biological role, component of the NOP7 complex, which is required for maturation of the 25S and 5.8S ribosomal RNAs and formation of the 60S ribosome. This Saccharomyces cerevisiae (strain YJM789) (Baker's yeast) protein is Pescadillo homolog.